Consider the following 213-residue polypeptide: RNA chaperone ProQ (213 aa).

Positions 105–150 (ESQEKAKAKRAAQTPKAAPAGKAPAKKAPKKVAVPARKTERPAKAA) are disordered. The span at 115–127 (AAQTPKAAPAGKA) shows a compositional bias: low complexity.

It belongs to the ProQ family.

Its subcellular location is the cytoplasm. In terms of biological role, RNA chaperone with significant RNA binding, RNA strand exchange and RNA duplexing activities. In Shewanella oneidensis (strain ATCC 700550 / JCM 31522 / CIP 106686 / LMG 19005 / NCIMB 14063 / MR-1), this protein is RNA chaperone ProQ.